A 688-amino-acid chain; its full sequence is G protein-coupled receptor kinase 3 (688 aa).

Positions 1–190 (MADLEAVLAD…ELNIHLTMND (190 aa)) are N-terminal. Positions 54–175 (TFDKIFNQRI…MESDKFTRFC (122 aa)) constitute an RGS domain. A Protein kinase domain is found at 191–453 (FSVHRIIGRG…AQELKTHDFF (263 aa)). ATP contacts are provided by residues 197–205 (IGRGGFGEV) and Lys-220. Residue Asp-317 is the Proton acceptor of the active site. Positions 454-521 (RGIDWQHVYL…VISERWQQEV (68 aa)) constitute an AGC-kinase C-terminal domain. The PH domain occupies 558–652 (DCIVHGYMLK…WKKELTETFM (95 aa)).

This sequence belongs to the protein kinase superfamily. AGC Ser/Thr protein kinase family. GPRK subfamily. Interacts with GIT1. Ubiquitinated. As to expression, ubiquitous; brain, spleen &gt; heart, lung &gt; kidney.

It localises to the postsynapse. The protein localises to the presynapse. It catalyses the reaction [beta-adrenergic receptor] + ATP = [beta-adrenergic receptor]-phosphate + ADP + H(+). Functionally, specifically phosphorylates the agonist-occupied form of the beta-adrenergic and closely related receptors. This Bos taurus (Bovine) protein is G protein-coupled receptor kinase 3.